A 149-amino-acid chain; its full sequence is Transcription antitermination protein NusB (149 aa).

The protein belongs to the NusB family.

In terms of biological role, involved in transcription antitermination. Required for transcription of ribosomal RNA (rRNA) genes. Binds specifically to the boxA antiterminator sequence of the ribosomal RNA (rrn) operons. This Acinetobacter baumannii (strain SDF) protein is Transcription antitermination protein NusB.